The following is a 359-amino-acid chain: UPF0283 membrane protein RHE_CH02332 (359 aa).

The interval 1-61 (MSKPPSDLPR…EDPFINPDRD (61 aa)) is disordered. The next 2 helical transmembrane spans lie at 77-97 (FGKI…GLWT) and 111-131 (LGYA…ALVI).

Belongs to the UPF0283 family.

It localises to the cell inner membrane. The protein is UPF0283 membrane protein RHE_CH02332 of Rhizobium etli (strain ATCC 51251 / DSM 11541 / JCM 21823 / NBRC 15573 / CFN 42).